Reading from the N-terminus, the 125-residue chain is Large ribosomal subunit protein bL12 (125 aa).

It belongs to the bacterial ribosomal protein bL12 family. Homodimer. Part of the ribosomal stalk of the 50S ribosomal subunit. Forms a multimeric L10(L12)X complex, where L10 forms an elongated spine to which 2 to 4 L12 dimers bind in a sequential fashion. Binds GTP-bound translation factors.

Functionally, forms part of the ribosomal stalk which helps the ribosome interact with GTP-bound translation factors. Is thus essential for accurate translation. The polypeptide is Large ribosomal subunit protein bL12 (Campylobacter curvus (strain 525.92)).